A 343-amino-acid polypeptide reads, in one-letter code: uncharacterized protein (343 aa).

Disordered stretches follow at residues 1-27 (MIREWENGCPKIGKQRARDSRAQERMT) and 205-247 (SGGL…SKRQ). Residues 16 to 27 (RARDSRAQERMT) are compositionally biased toward basic and acidic residues. The segment covering 219 to 228 (GQDDGNTDDG) has biased composition (acidic residues). Residues 229 to 247 (NDVHQKGRGEVESKTSKRQ) are compositionally biased toward basic and acidic residues.

Its function is as follows. Dispensable for normal development and fertility. This is an uncharacterized protein from Bos taurus (Bovine).